We begin with the raw amino-acid sequence, 81 residues long: Large ribosomal subunit protein bL27 (81 aa).

The span at 1-11 (MATSKSGGSSK) shows a compositional bias: polar residues. The interval 1–21 (MATSKSGGSSKNGRDSISKRL) is disordered.

This sequence belongs to the bacterial ribosomal protein bL27 family.

This chain is Large ribosomal subunit protein bL27, found in Borrelia hermsii (strain HS1 / DAH).